Reading from the N-terminus, the 129-residue chain is Phosphoribosyl-AMP cyclohydrolase (129 aa).

Aspartate 82 is a binding site for Mg(2+). A Zn(2+)-binding site is contributed by cysteine 83. Residues aspartate 84 and aspartate 86 each coordinate Mg(2+). Zn(2+) contacts are provided by cysteine 99 and cysteine 106.

This sequence belongs to the PRA-CH family. In terms of assembly, homodimer. The cofactor is Mg(2+). It depends on Zn(2+) as a cofactor.

The protein localises to the cytoplasm. It catalyses the reaction 1-(5-phospho-beta-D-ribosyl)-5'-AMP + H2O = 1-(5-phospho-beta-D-ribosyl)-5-[(5-phospho-beta-D-ribosylamino)methylideneamino]imidazole-4-carboxamide. It functions in the pathway amino-acid biosynthesis; L-histidine biosynthesis; L-histidine from 5-phospho-alpha-D-ribose 1-diphosphate: step 3/9. In terms of biological role, catalyzes the hydrolysis of the adenine ring of phosphoribosyl-AMP. In Methanosarcina barkeri (strain Fusaro / DSM 804), this protein is Phosphoribosyl-AMP cyclohydrolase.